Here is a 733-residue protein sequence, read N- to C-terminus: Protein OBERON 3 (733 aa).

The segment covering 1 to 15 has biased composition (basic and acidic residues); it reads MIGEKDLAGDGECSR. Disordered regions lie at residues 1–42 and 118–142; these read MIGE…YHQK and NPNS…KKSN. Polar residues predominate over residues 21–30; sequence PRFSNLNNQT. Residues 120 to 153 adopt a coiled-coil conformation; the sequence is NSSKRKAHEEEEEAEEEEDKKSNKIETLNLSLAL. A PHD-type zinc finger spans residues 436 to 500; it reads SCMCPVCLRF…MFHCIGCAHK (65 aa). The interval 592–614 is disordered; the sequence is VAAETSYRKDEASVTPSTSKDQK. Positions 644–733 form a coiled coil; it reads MFQKKADEAR…RMEVTRQQLV (90 aa).

Self-interacts. Interacts with OBE1 and OBE2. Interacts with OBE4.

It is found in the nucleus. In terms of biological role, probable transcription factor that functions redundantly with OBE4 in specification of the hypophysis and establishment of the embryonic root. Involved in the activation of ARF5/MP-dependent gene expression during embryonic root meristem initiation. Involved in shoot meristem homeostasis. The chain is Protein OBERON 3 from Arabidopsis thaliana (Mouse-ear cress).